The chain runs to 314 residues: Protein OPG185 (314 aa).

A signal peptide spans 1 to 16; that stretch reads MARLPILLLLISLVYS. The 105-residue stretch at 17–121 folds into the Ig-like V-type domain; the sequence is TPSPQTSKKI…NDTDKVDYEE (105 aa). At 17 to 278 the chain is on the virion surface side; the sequence is TPSPQTSKKI…SNYKTKDFVE (262 aa). Residues Cys34 and Cys103 are joined by a disulfide bond. Residues Asn37, Asn38, Asn69, Asn112, and Asn161 are each glycosylated (N-linked (GlcNAc...) asparagine; by host). Positions 192–217 are disordered; it reads NTVSTTSRESTTDETPEPITDKEEDH. Residue Asn253 is glycosylated (N-linked (GlcNAc...) asparagine; by host). The helical transmembrane segment at 279–302 threads the bilayer; the sequence is IFGITALIILSAVAIFCITYYICN. Residues 303–314 lie on the Intravirion side of the membrane; that stretch reads KRSRKYKTENKV.

Belongs to the orthopoxvirus OPG185 family. Heterodimerizes with OPG040. The heterodimer OPG185-OPG040 interacts with components of the entry fusion complex OPG143 and OPG094. Heterodimer with C3/VPC protein; disulfide-linked. Glycosylated; contains phosphate and sulfate-substituted glycans. O-glycosylation is required for hemagglutination and hemadsorption activities of infected cell membranes.

It localises to the virion membrane. Its subcellular location is the host membrane. Functionally, prevents cell to cell fusion by interacting with and directing the viral OPG040 protein on the host plasma membrane. The OPG185-OPG040 complex associates with components of the entry fusion complex (EFC) presumably to avoid superinfection and syncytium formation. Via its interaction with C3/VCP protein, protects the infected cell and probably also the extracellular enveloped virus from complement attack. The polypeptide is Protein OPG185 (OPG185) (Bos taurus (Bovine)).